The chain runs to 217 residues: 3,4-dihydroxy-2-butanone 4-phosphate synthase (217 aa).

D-ribulose 5-phosphate-binding positions include 37 to 38, aspartate 42, 150 to 154, and glutamate 174; these read RE and RGGHT. Glutamate 38 serves as a coordination point for Mg(2+). Position 153 (histidine 153) interacts with Mg(2+).

The protein belongs to the DHBP synthase family. In terms of assembly, homodimer. Mg(2+) is required as a cofactor. It depends on Mn(2+) as a cofactor.

It carries out the reaction D-ribulose 5-phosphate = (2S)-2-hydroxy-3-oxobutyl phosphate + formate + H(+). It participates in cofactor biosynthesis; riboflavin biosynthesis; 2-hydroxy-3-oxobutyl phosphate from D-ribulose 5-phosphate: step 1/1. In terms of biological role, catalyzes the conversion of D-ribulose 5-phosphate to formate and 3,4-dihydroxy-2-butanone 4-phosphate. This chain is 3,4-dihydroxy-2-butanone 4-phosphate synthase, found in Sodalis glossinidius (strain morsitans).